The primary structure comprises 306 residues: Putative beta-lactamase HcpD (306 aa).

The first 25 residues, methionine 1 to alanine 25, serve as a signal peptide directing secretion. TPR repeat units follow at residues glycine 28–valine 61, histidine 96–valine 133, glycine 168–alanine 205, and glycine 240–glycine 277. 7 disulfides stabilise this stretch: cysteine 55–cysteine 63, cysteine 91–cysteine 99, cysteine 127–cysteine 135, cysteine 163–cysteine 171, cysteine 199–cysteine 207, cysteine 235–cysteine 243, and cysteine 271–cysteine 279.

Belongs to the hcp beta-lactamase family.

It is found in the secreted. The enzyme catalyses a beta-lactam + H2O = a substituted beta-amino acid. Its function is as follows. May hydrolyze 6-aminopenicillinic acid and 7-aminocephalosporanic acid (ACA) derivatives. Binds to penicillin. In Helicobacter pylori (strain ATCC 700392 / 26695) (Campylobacter pylori), this protein is Putative beta-lactamase HcpD (hcpD).